The following is a 344-amino-acid chain: Sorting nexin-16 (344 aa).

Positions 1 to 10 are enriched in pro residues; the sequence is MATPYVPVPM. 2 disordered regions span residues 1–49 and 83–105; these read MATP…DSSV and SIEY…NWED. Polar residues predominate over residues 14–26; that stretch reads NSASSFTNNRNQR. Residues 27-40 show a composition bias toward low complexity; that stretch reads SSSFGSVSTSSNSS. Residues 88-105 are compositionally biased toward basic and acidic residues; that stretch reads ARPRDTEEQHPDALNWED. The region spanning 105 to 218 is the PX domain; the sequence is DRPSTPTILG…EFLCLDDPPG (114 aa). A 1,2-diacyl-sn-glycero-3-phospho-(1D-myo-inositol-3-phosphate)-binding residues include R144, T146, and R184. S222 bears the Phosphoserine mark. Residues 223-278 adopt a coiled-coil conformation; it reads LEESRAFCETLEETNYHLQRELLEKQKEVESLKKLLGEKQLHIDALETRIRTLSLE.

The protein belongs to the sorting nexin family. Homooligomer. Interacts with EGFR.

The protein resides in the early endosome membrane. Its subcellular location is the late endosome membrane. It localises to the cytoplasm. It is found in the lysosome. May be involved in several stages of intracellular trafficking. Plays a role in protein transport from early to late endosomes. Plays a role in protein transport to the lysosome. Promotes degradation of EGFR after EGF signaling. This is Sorting nexin-16 (Snx16) from Rattus norvegicus (Rat).